Here is an 83-residue protein sequence, read N- to C-terminus: Translation initiation factor IF-1 (83 aa).

The S1-like domain maps to 1-72; that stretch reads MAKEELIEMQ…SKGRITFRHL (72 aa).

This sequence belongs to the IF-1 family. As to quaternary structure, component of the 30S ribosomal translation pre-initiation complex which assembles on the 30S ribosome in the order IF-2 and IF-3, IF-1 and N-formylmethionyl-tRNA(fMet); mRNA recruitment can occur at any time during PIC assembly.

The protein localises to the cytoplasm. In terms of biological role, one of the essential components for the initiation of protein synthesis. Stabilizes the binding of IF-2 and IF-3 on the 30S subunit to which N-formylmethionyl-tRNA(fMet) subsequently binds. Helps modulate mRNA selection, yielding the 30S pre-initiation complex (PIC). Upon addition of the 50S ribosomal subunit IF-1, IF-2 and IF-3 are released leaving the mature 70S translation initiation complex. This is Translation initiation factor IF-1 from Verminephrobacter eiseniae (strain EF01-2).